The sequence spans 111 residues: Ferredoxin, 2Fe-2S (111 aa).

[2Fe-2S] cluster is bound by residues C10, C23, C56, and C60.

In terms of assembly, homodimer in solution. [2Fe-2S] cluster serves as cofactor.

Its function is as follows. Ferredoxins are iron-sulfur proteins that transfer electrons in a wide variety of metabolic reactions. The chain is Ferredoxin, 2Fe-2S (fdx4) from Aquifex aeolicus (strain VF5).